A 427-amino-acid chain; its full sequence is CCA-adding enzyme (427 aa).

ATP contacts are provided by Ser-50 and Lys-53. CTP is bound by residues Ser-50 and Lys-53. The Mg(2+) site is built by Asp-61, Asp-63, and Asp-112. Residues His-135, Lys-155, and Tyr-164 each contribute to the ATP site. CTP is bound by residues His-135, Lys-155, and Tyr-164.

It belongs to the tRNA nucleotidyltransferase/poly(A) polymerase family. Archaeal CCA-adding enzyme subfamily. Homodimer. Requires Mg(2+) as cofactor.

It catalyses the reaction a tRNA precursor + 2 CTP + ATP = a tRNA with a 3' CCA end + 3 diphosphate. The enzyme catalyses a tRNA with a 3' CCA end + 2 CTP + ATP = a tRNA with a 3' CCACCA end + 3 diphosphate. In terms of biological role, catalyzes the addition and repair of the essential 3'-terminal CCA sequence in tRNAs without using a nucleic acid template. Adds these three nucleotides in the order of C, C, and A to the tRNA nucleotide-73, using CTP and ATP as substrates and producing inorganic pyrophosphate. tRNA 3'-terminal CCA addition is required both for tRNA processing and repair. Also involved in tRNA surveillance by mediating tandem CCA addition to generate a CCACCA at the 3' terminus of unstable tRNAs. While stable tRNAs receive only 3'-terminal CCA, unstable tRNAs are marked with CCACCA and rapidly degraded. The polypeptide is CCA-adding enzyme (Picrophilus torridus (strain ATCC 700027 / DSM 9790 / JCM 10055 / NBRC 100828 / KAW 2/3)).